Consider the following 207-residue polypeptide: Ribosomal RNA small subunit methyltransferase G (207 aa).

Residues Gly-73, Leu-78, 124-125, and Arg-139 each bind S-adenosyl-L-methionine; that span reads VE.

The protein belongs to the methyltransferase superfamily. RNA methyltransferase RsmG family.

The protein localises to the cytoplasm. The enzyme catalyses guanosine(527) in 16S rRNA + S-adenosyl-L-methionine = N(7)-methylguanosine(527) in 16S rRNA + S-adenosyl-L-homocysteine. Specifically methylates the N7 position of guanine in position 527 of 16S rRNA. The protein is Ribosomal RNA small subunit methyltransferase G of Salmonella arizonae (strain ATCC BAA-731 / CDC346-86 / RSK2980).